The following is a 192-amino-acid chain: Thymidine kinase (192 aa).

ATP is bound by residues 9-16 and 85-88; these read GAMNSGKT and DEAQ. The active-site Proton acceptor is Glu86. The Zn(2+) site is built by Cys143, Cys146, Cys180, and His183.

It belongs to the thymidine kinase family. As to quaternary structure, homotetramer.

The protein localises to the cytoplasm. The enzyme catalyses thymidine + ATP = dTMP + ADP + H(+). This is Thymidine kinase from Lactiplantibacillus plantarum (strain ATCC BAA-793 / NCIMB 8826 / WCFS1) (Lactobacillus plantarum).